The primary structure comprises 330 residues: Beta-ketoacyl-[acyl-carrier-protein] synthase III (330 aa).

Residues Cys-115 and His-255 contribute to the active site. An ACP-binding region spans residues 256–260; the sequence is QANFR. The active site involves Asn-285.

Belongs to the thiolase-like superfamily. FabH family. Homodimer.

The protein localises to the cytoplasm. It catalyses the reaction malonyl-[ACP] + acetyl-CoA + H(+) = 3-oxobutanoyl-[ACP] + CO2 + CoA. Its pathway is lipid metabolism; fatty acid biosynthesis. Its function is as follows. Catalyzes the condensation reaction of fatty acid synthesis by the addition to an acyl acceptor of two carbons from malonyl-ACP. Catalyzes the first condensation reaction which initiates fatty acid synthesis and may therefore play a role in governing the total rate of fatty acid production. Possesses both acetoacetyl-ACP synthase and acetyl transacylase activities. Its substrate specificity determines the biosynthesis of branched-chain and/or straight-chain of fatty acids. The polypeptide is Beta-ketoacyl-[acyl-carrier-protein] synthase III (Helicobacter pylori (strain P12)).